A 231-amino-acid polypeptide reads, in one-letter code: Ribose-5-phosphate isomerase A (231 aa).

Substrate-binding positions include 31-34, 87-90, and 100-103; these read SGST, DGAD, and KGGG. Catalysis depends on E109, which acts as the Proton acceptor. A substrate-binding site is contributed by K127.

Belongs to the ribose 5-phosphate isomerase family. Homodimer.

The enzyme catalyses aldehydo-D-ribose 5-phosphate = D-ribulose 5-phosphate. Its pathway is carbohydrate degradation; pentose phosphate pathway; D-ribose 5-phosphate from D-ribulose 5-phosphate (non-oxidative stage): step 1/1. In terms of biological role, catalyzes the reversible conversion of ribose-5-phosphate to ribulose 5-phosphate. This is Ribose-5-phosphate isomerase A from Chlamydia pneumoniae (Chlamydophila pneumoniae).